Consider the following 274-residue polypeptide: Large ribosomal subunit protein uL2cz (274 aa).

Disordered stretches follow at residues Met-1–Asn-25 and Asn-224–Lys-274. Polar residues predominate over residues Lys-7–Asn-25.

Belongs to the universal ribosomal protein uL2 family. In terms of assembly, part of the 50S ribosomal subunit.

The protein localises to the plastid. It is found in the chloroplast. The sequence is that of Large ribosomal subunit protein uL2cz (rpl2-A) from Coffea arabica (Arabian coffee).